A 361-amino-acid chain; its full sequence is Ribosomal RNA small subunit methyltransferase H (361 aa).

Residues 54-56 (GGH), D74, Y101, D122, and Q129 each bind S-adenosyl-L-methionine. Residues 318-361 (ARNSRASSAKLRAAQRLAEGQAPRPRRRNKYAPEGRDEPEGGAA) form a disordered region. A compositionally biased stretch (basic and acidic residues) spans 348–361 (YAPEGRDEPEGGAA).

This sequence belongs to the methyltransferase superfamily. RsmH family.

It is found in the cytoplasm. The catalysed reaction is cytidine(1402) in 16S rRNA + S-adenosyl-L-methionine = N(4)-methylcytidine(1402) in 16S rRNA + S-adenosyl-L-homocysteine + H(+). Functionally, specifically methylates the N4 position of cytidine in position 1402 (C1402) of 16S rRNA. This Nitratidesulfovibrio vulgaris (strain DSM 19637 / Miyazaki F) (Desulfovibrio vulgaris) protein is Ribosomal RNA small subunit methyltransferase H.